Consider the following 953-residue polypeptide: ALS2 C-terminal-like protein (953 aa).

MORN repeat units lie at residues 358 to 380 (YEGE…DGRN), 381 to 403 (HVGD…QASE), 409 to 431 (YKCH…TSEV), 432 to 454 (YKGY…PQAP), 459 to 481 (YTGH…DRGE), 483 to 505 (YIGM…AGVC), 506 to 528 (YQGT…DDSL), and 529 to 552 (YEGT…NGFT). The 147-residue stretch at 796 to 942 (LFPDARLLEF…IQKEDMRLHR (147 aa)) folds into the VPS9 domain.

Homodimer. Forms a heteromeric complex with ALS2. Interacts with ALS2 and RAB5A.

The protein resides in the cytoplasm. Acts as a guanine nucleotide exchange factor (GEF) for Rab5 GTPase. Regulates the ALS2-mediated endosome dynamics. The polypeptide is ALS2 C-terminal-like protein (ALS2CL) (Bos taurus (Bovine)).